The sequence spans 428 residues: Adenylosuccinate synthetase (428 aa).

Residues 12-18 and 40-42 contribute to the GTP site; these read GDEGKGK and GHT. Catalysis depends on D13, which acts as the Proton acceptor. D13 and G40 together coordinate Mg(2+). IMP is bound by residues 13–16, 38–41, T130, R144, Q225, T240, and R304; these read DEGK and NAGH. Residue H41 is the Proton donor of the active site. 300–306 is a binding site for substrate; that stretch reads VTTGRAR. GTP is bound by residues R306, 332 to 334, and 414 to 416; these read KID and SVG.

The protein belongs to the adenylosuccinate synthetase family. In terms of assembly, homodimer. Mg(2+) serves as cofactor.

It is found in the cytoplasm. The enzyme catalyses IMP + L-aspartate + GTP = N(6)-(1,2-dicarboxyethyl)-AMP + GDP + phosphate + 2 H(+). The protein operates within purine metabolism; AMP biosynthesis via de novo pathway; AMP from IMP: step 1/2. Its function is as follows. Plays an important role in the de novo pathway of purine nucleotide biosynthesis. Catalyzes the first committed step in the biosynthesis of AMP from IMP. The polypeptide is Adenylosuccinate synthetase (Clostridium botulinum (strain Loch Maree / Type A3)).